Here is a 372-residue protein sequence, read N- to C-terminus: N-methyl-L-tryptophan oxidase (372 aa).

4-34 (DLIIIGSGSVGAAAGYYATRAGLKVLMTDAH) contacts FAD. At Cys307 the chain carries S-8alpha-FAD cysteine.

This sequence belongs to the MSOX/MTOX family. MTOX subfamily. In terms of assembly, monomer. FAD serves as cofactor.

It carries out the reaction N(alpha)-methyl-L-tryptophan + O2 + H2O = L-tryptophan + formaldehyde + H2O2. Its function is as follows. Catalyzes the oxidative demethylation of N-methyl-L-tryptophan. This chain is N-methyl-L-tryptophan oxidase, found in Salmonella typhi.